Consider the following 1018-residue polypeptide: UPF0182 protein Tfu_0541 (1018 aa).

Helical transmembrane passes span 20–40 (LAPV…AANF), 64–84 (ALLF…SVYF), 115–135 (VFFW…ATAE), 171–191 (VIIG…VVVH), 212–232 (VHLS…YWLE), 254–274 (AVLY…VLFF), and 287–307 (VSLG…PAIV). 2 disordered regions span residues 497–570 (YPVD…QANN) and 939–965 (GDEA…ASSD). Acidic residues-rich tracts occupy residues 542-560 (QDQE…EEEQ) and 939-959 (GDEA…EEEQ).

This sequence belongs to the UPF0182 family.

The protein localises to the cell membrane. The sequence is that of UPF0182 protein Tfu_0541 from Thermobifida fusca (strain YX).